A 346-amino-acid chain; its full sequence is 3 beta-hydroxysteroid dehydrogenase/Delta 5--&gt;4-isomerase (346 aa).

The active-site Proton acceptor is the Tyr-147. Position 151 (Lys-151) interacts with NAD(+).

This sequence belongs to the 3-beta-HSD family.

The catalysed reaction is a 3beta-hydroxy-Delta(5)-steroid + NAD(+) = a 3-oxo-Delta(5)-steroid + NADH + H(+). It catalyses the reaction a 3-oxo-Delta(5)-steroid = a 3-oxo-Delta(4)-steroid. The protein operates within lipid metabolism; steroid biosynthesis. Functionally, catalyzes the oxidative conversion of Delta(5)-ene-3-beta-hydroxy steroid, and the oxidative conversion of ketosteroids. The 3-beta-HSD enzymatic system plays a crucial role in the biosynthesis of all classes of hormonal steroids. During viral infection, steroid production contributes to virulence by inhibiting the host inflammatory response. The sequence is that of 3 beta-hydroxysteroid dehydrogenase/Delta 5--&gt;4-isomerase (OPG174) from Homo sapiens (Human).